Consider the following 121-residue polypeptide: Small ribosomal subunit protein uS13 (121 aa).

The segment at 97-121 is disordered; the sequence is VRGQRTRTNARTRRGARKTVAGKKK. Residues 100–121 show a composition bias toward basic residues; the sequence is QRTRTNARTRRGARKTVAGKKK.

The protein belongs to the universal ribosomal protein uS13 family. As to quaternary structure, part of the 30S ribosomal subunit. Forms a loose heterodimer with protein S19. Forms two bridges to the 50S subunit in the 70S ribosome.

Located at the top of the head of the 30S subunit, it contacts several helices of the 16S rRNA. In the 70S ribosome it contacts the 23S rRNA (bridge B1a) and protein L5 of the 50S subunit (bridge B1b), connecting the 2 subunits; these bridges are implicated in subunit movement. Contacts the tRNAs in the A and P-sites. This is Small ribosomal subunit protein uS13 from Prochlorococcus marinus (strain MIT 9303).